The chain runs to 231 residues: Endonuclease NucS (231 aa).

The protein belongs to the NucS endonuclease family.

It localises to the cytoplasm. Cleaves both 3' and 5' ssDNA extremities of branched DNA structures. The polypeptide is Endonuclease NucS (Pseudarthrobacter chlorophenolicus (strain ATCC 700700 / DSM 12829 / CIP 107037 / JCM 12360 / KCTC 9906 / NCIMB 13794 / A6) (Arthrobacter chlorophenolicus)).